The sequence spans 369 residues: Dof zinc finger protein DOF2.5 (369 aa).

The segment at 80–134 (LNCPRCNSTNTKFCYYNNYSLTQPRYFCKGCRRYWTEGGSLRNVPVGGSSRKNKR) adopts a Dof-type zinc-finger fold. Zn(2+) contacts are provided by cysteine 82, cysteine 85, cysteine 107, and cysteine 110. 4 disordered regions span residues 120 to 149 (LRNV…TIPS), 203 to 224 (EGNG…YGSS), 284 to 304 (TDHQ…HSDH), and 322 to 369 (SSSI…GSSW). Low complexity predominate over residues 214–224 (PSSSSSVYGSS). Residues 284-297 (TDHQGLGHNSNNRS) are compositionally biased toward polar residues. Over residues 342 to 362 (NNNNNNNSSPNNGYWSGMFST) the composition is skewed to low complexity.

As to expression, expressed in the vascular system of the mother plant, but not present in the seed and embryo. In maturing siliques, found all through the funiculus connecting the placenta to the ovule, but not in the ovule.

The protein localises to the nucleus. In terms of biological role, transcription factor specifically involved in the maternal control of seed germination. Regulates transcription by binding to a 5'-AA[AG]G-3' consensus core sequence. May ensure the activation of a component that would trigger germination as a consequence of red light perception. This is Dof zinc finger protein DOF2.5 (DOF2.5) from Arabidopsis thaliana (Mouse-ear cress).